A 660-amino-acid chain; its full sequence is DNA topoisomerase I, plasmid (660 aa).

Residues 1 to 110 (MKLMIIESPG…LRVTFNEITA (110 aa)) enclose the Toprim domain. The Mg(2+) site is built by E7 and D79. A Topo IA-type catalytic domain is found at 124–550 (DVKRVAAQEA…KVHDQLNMEL (427 aa)). The segment at 158 to 163 (SAGRVQ) is interaction with DNA. Residue Y287 is the O-(5'-phospho-DNA)-tyrosine intermediate of the active site. 2 C4-type zinc fingers span residues 563 to 589 (CQEC…YPDC) and 613 to 643 (CVKC…KEGC).

It belongs to the type IA topoisomerase family. As to quaternary structure, monomer. Requires Mg(2+) as cofactor.

The catalysed reaction is ATP-independent breakage of single-stranded DNA, followed by passage and rejoining.. In terms of biological role, releases the supercoiling and torsional tension of DNA, which is introduced during the DNA replication and transcription, by transiently cleaving and rejoining one strand of the DNA duplex. Introduces a single-strand break via transesterification at a target site in duplex DNA. The scissile phosphodiester is attacked by the catalytic tyrosine of the enzyme, resulting in the formation of a DNA-(5'-phosphotyrosyl)-enzyme intermediate and the expulsion of a 3'-OH DNA strand. The free DNA strand then undergoes passage around the unbroken strand, thus removing DNA supercoils. Finally, in the religation step, the DNA 3'-OH attacks the covalent intermediate to expel the active-site tyrosine and restore the DNA phosphodiester backbone. This chain is DNA topoisomerase I, plasmid, found in Xylella fastidiosa (strain 9a5c).